The sequence spans 189 residues: Probable nicotinate-nucleotide adenylyltransferase (189 aa).

The protein belongs to the NadD family.

It carries out the reaction nicotinate beta-D-ribonucleotide + ATP + H(+) = deamido-NAD(+) + diphosphate. Its pathway is cofactor biosynthesis; NAD(+) biosynthesis; deamido-NAD(+) from nicotinate D-ribonucleotide: step 1/1. Functionally, catalyzes the reversible adenylation of nicotinate mononucleotide (NaMN) to nicotinic acid adenine dinucleotide (NaAD). The polypeptide is Probable nicotinate-nucleotide adenylyltransferase (Bacillus cytotoxicus (strain DSM 22905 / CIP 110041 / 391-98 / NVH 391-98)).